The sequence spans 368 residues: Agmatine deiminase (368 aa).

Cysteine 357 (amidino-cysteine intermediate) is an active-site residue.

This sequence belongs to the agmatine deiminase family. In terms of assembly, homodimer.

It catalyses the reaction agmatine + H2O = N-carbamoylputrescine + NH4(+). The protein operates within amine and polyamine biosynthesis; putrescine biosynthesis via agmatine pathway; N-carbamoylputrescine from agmatine: step 1/1. Functionally, mediates the hydrolysis of agmatine into N-carbamoylputrescine in the arginine decarboxylase (ADC) pathway of putrescine biosynthesis, a basic polyamine. The sequence is that of Agmatine deiminase from Pseudomonas aeruginosa (strain UCBPP-PA14).